The sequence spans 189 residues: MARLCAFLMTLLVMSYWSTCSLGCDLPQTHNLRNKRALTLLAQMRRLSPLSCLKDRKNFRFPQEKVDAQQIKKAQVIPVLSELTQQILTLFTSKDSSAAWNTTLLDSFCNDLHQQLNDLQGCLMQQVGVQEPPLTQEDSLLAVRKYFHRITVYLREKKHSPCAWEVVRAEVWRTLSSSAKLLARLSEKE.

A signal peptide spans 1-23 (MARLCAFLMTLLVMSYWSTCSLG). Disulfide bonds link Cys-24-Cys-122 and Cys-52-Cys-162. N-linked (GlcNAc...) asparagine glycosylation occurs at Asn-101.

Belongs to the alpha/beta interferon family.

The protein localises to the secreted. In terms of biological role, produced by macrophages, IFN-alpha have antiviral activities. Interferon stimulates the production of two enzymes: a protein kinase and an oligoadenylate synthetase. This is Interferon alpha-12 (Ifna12) from Mus musculus (Mouse).